The following is a 72-amino-acid chain: Translation initiation factor IF-1 (72 aa).

Positions 1-72 constitute an S1-like domain; it reads MAKEEAITVD…SKGRITYRKK (72 aa).

The protein belongs to the IF-1 family. Component of the 30S ribosomal translation pre-initiation complex which assembles on the 30S ribosome in the order IF-2 and IF-3, IF-1 and N-formylmethionyl-tRNA(fMet); mRNA recruitment can occur at any time during PIC assembly.

It localises to the cytoplasm. Its function is as follows. One of the essential components for the initiation of protein synthesis. Stabilizes the binding of IF-2 and IF-3 on the 30S subunit to which N-formylmethionyl-tRNA(fMet) subsequently binds. Helps modulate mRNA selection, yielding the 30S pre-initiation complex (PIC). Upon addition of the 50S ribosomal subunit IF-1, IF-2 and IF-3 are released leaving the mature 70S translation initiation complex. The sequence is that of Translation initiation factor IF-1 from Leptospira borgpetersenii serovar Hardjo-bovis (strain L550).